The primary structure comprises 810 residues: Oligoxyloglucan-reducing end-specific xyloglucanase (810 aa).

Positions 1–28 (MRAKNGPGSWLALTAIATSLNTLALAAA) are cleaved as a signal peptide. N-linked (GlcNAc...) asparagine glycosylation is present at N32. The active-site Nucleophile is the D66. One copy of the BNR 1 repeat lies at 126–135 (FVSQDRGATF). N-linked (GlcNAc...) asparagine glycosylation is present at N188. One copy of the BNR 2 repeat lies at 226 to 236 (YVTRDSGESWE). Residues N298, N312, and N321 are each glycosylated (N-linked (GlcNAc...) asparagine). Residues 359–369 (YLSHDGGKSWK) form a BNR 3 repeat. N-linked (GlcNAc...) asparagine glycosylation is present at N455. The Proton donor role is filled by D498. An N-linked (GlcNAc...) asparagine glycan is attached at N544. One copy of the BNR 4 repeat lies at 554 to 564 (YSADGGSSWTK). N-linked (GlcNAc...) asparagine glycosylation is found at N573 and N612. The BNR 5 repeat unit spans residues 617–626 (YVTTDLGQTW). A glycan (N-linked (GlcNAc...) asparagine) is linked at N638. 3 BNR repeats span residues 658-667 (YLSRDGGLSY), 705-716 (YHTRNFGKKWTK), and 759-769 (YRSDDNGKTWV).

It belongs to the glycosyl hydrolase 74 family.

It localises to the secreted. The catalysed reaction is Hydrolysis of cellobiose from the reducing end of xyloglucans consisting of a beta-(1-&gt;4)-linked glucan carrying alpha-D-xylosyl groups on O-6 of the glucose residues. To be a substrate, the first residue must be unsubstituted, the second residue may bear a xylosyl group, whether further glycosylated or not, and the third residue, which becomes the new terminus by the action of the enzyme, is preferably xylosylated, but this xylose residue must not be further substituted.. In terms of biological role, oligoxyloglucan-reducing end-specific xyloglucanase involved in degradation of xyloglucans. Releases the first two glycosyl segments from oligoxyloglucans. Active against cotton xyloglucan, tamarind xyloglucan and tamarind xyloglucan oligomers. This chain is Oligoxyloglucan-reducing end-specific xyloglucanase (xgcA), found in Emericella nidulans (strain FGSC A4 / ATCC 38163 / CBS 112.46 / NRRL 194 / M139) (Aspergillus nidulans).